Here is a 234-residue protein sequence, read N- to C-terminus: Glucosamine-6-phosphate deaminase (234 aa).

Aspartate 62 serves as the catalytic Proton acceptor; for enolization step. Residue asparagine 128 is the For ring-opening step of the active site. Histidine 130 (proton acceptor; for ring-opening step) is an active-site residue. The active-site For ring-opening step is the glutamate 135.

This sequence belongs to the glucosamine/galactosamine-6-phosphate isomerase family. NagB subfamily.

It catalyses the reaction alpha-D-glucosamine 6-phosphate + H2O = beta-D-fructose 6-phosphate + NH4(+). The protein operates within amino-sugar metabolism; N-acetylneuraminate degradation; D-fructose 6-phosphate from N-acetylneuraminate: step 5/5. Catalyzes the reversible isomerization-deamination of glucosamine 6-phosphate (GlcN6P) to form fructose 6-phosphate (Fru6P) and ammonium ion. This Streptococcus pyogenes serotype M18 (strain MGAS8232) protein is Glucosamine-6-phosphate deaminase.